A 298-amino-acid polypeptide reads, in one-letter code: Dihydrodipicolinate reductase-like protein CRR1, chloroplastic (298 aa).

Residues 1 to 25 (MAAVNCHFFQLSRHLKPSRPSFSCS) constitute a chloroplast transit peptide. 160–163 (APTL) contacts NAD(+).

Belongs to the DapB family. As to expression, expressed specifically in leaves.

Its subcellular location is the plastid. The protein resides in the chloroplast stroma. Functionally, dihydrodipicolinate reductase (DHPR)-like protein that may not function as DHPR in lysine biosynthesis. Required for both formation and activity of the chloroplast NAD(P)H dehydrogenase (NDH) complex of the photosynthetic electron transport chain. May function in assembly or stabilization of the NDH complex. This chain is Dihydrodipicolinate reductase-like protein CRR1, chloroplastic, found in Arabidopsis thaliana (Mouse-ear cress).